We begin with the raw amino-acid sequence, 350 residues long: Protein-glutamate methylesterase/protein-glutamine glutaminase 2 (350 aa).

The region spanning 3–121 (RVLLVDDSPV…DPDYEEAVSE (119 aa)) is the Response regulatory domain. Residue Asp54 is modified to 4-aspartylphosphate. Residues 158-322 (IHQDIRVIVI…SFVYGMPGAA (165 aa)) form the CheB-type methylesterase domain. Catalysis depends on residues Ser170, His197, and Asp290.

Belongs to the CheB family. In terms of processing, phosphorylated by CheA. Phosphorylation of the N-terminal regulatory domain activates the methylesterase activity.

The protein resides in the cytoplasm. The enzyme catalyses [protein]-L-glutamate 5-O-methyl ester + H2O = L-glutamyl-[protein] + methanol + H(+). The catalysed reaction is L-glutaminyl-[protein] + H2O = L-glutamyl-[protein] + NH4(+). Involved in chemotaxis. Part of a chemotaxis signal transduction system that modulates chemotaxis in response to various stimuli. Catalyzes the demethylation of specific methylglutamate residues introduced into the chemoreceptors (methyl-accepting chemotaxis proteins or MCP) by CheR. Also mediates the irreversible deamidation of specific glutamine residues to glutamic acid. In Methanospirillum hungatei JF-1 (strain ATCC 27890 / DSM 864 / NBRC 100397 / JF-1), this protein is Protein-glutamate methylesterase/protein-glutamine glutaminase 2.